Reading from the N-terminus, the 150-residue chain is Flagellar assembly factor FliW (150 aa).

This sequence belongs to the FliW family. As to quaternary structure, interacts with translational regulator CsrA and flagellin(s).

Its subcellular location is the cytoplasm. In terms of biological role, acts as an anti-CsrA protein, binds CsrA and prevents it from repressing translation of its target genes, one of which is flagellin. Binds to flagellin and participates in the assembly of the flagellum. This chain is Flagellar assembly factor FliW, found in Thermoanaerobacter pseudethanolicus (strain ATCC 33223 / 39E) (Clostridium thermohydrosulfuricum).